We begin with the raw amino-acid sequence, 69 residues long: Parvalbumin beta 3 (69 aa).

The residue at position 1 (A1) is an N-acetylalanine. The EF-hand domain maps to 24–59 (FNYKTFFKFFAIIDQDHSGFIEEEELKLFLQTFSAG). Ca(2+)-binding residues include D37, D39, S41, F43, E45, and E48.

This sequence belongs to the parvalbumin family.

Its function is as follows. In muscle, parvalbumin is thought to be involved in relaxation after contraction. It binds two calcium ions. In Merluccius polli (Benguela hake), this protein is Parvalbumin beta 3.